Here is a 158-residue protein sequence, read N- to C-terminus: MNFDDYFCKLQCCYWREFEFAYSKLDVKDKTITIIGNDCGSSALYFLLKGAKKIIGFEKEEKLNQIFKETVCKEFKICDKVESKGEWKSNEYPDTDILVMDCEGCEKNLDFSKLQKYKQYCIAIHDWTENRFDLLRKLYGTILTFVTDDNREFVFCKL.

This is an uncharacterized protein from Saccharolobus islandicus (Sulfolobus islandicus).